Here is a 317-residue protein sequence, read N- to C-terminus: Protein IRX15-LIKE (317 aa).

Residues 27–47 traverse the membrane as a helical segment; sequence LWLLAFVSFFTIAFLLTLLYT.

Expressed in roots, rosette leaves, stems and siliques. Expressed in the xylem.

It is found in the golgi apparatus membrane. Its function is as follows. Required for xylan biosynthesis, but not directly involved in catalyzing the addition of sugars to the growing polymer. In Arabidopsis thaliana (Mouse-ear cress), this protein is Protein IRX15-LIKE (IRX15-L).